We begin with the raw amino-acid sequence, 107 residues long: Replication initiation control protein YabA (107 aa).

4 residues coordinate Zn(2+): His-81, Cys-83, Cys-97, and Cys-100.

It belongs to the YabA family. As to quaternary structure, homotetramer. Interacts with both DnaA and DnaN, acting as a bridge between these two proteins. Requires Zn(2+) as cofactor.

It is found in the cytoplasm. It localises to the nucleoid. Its function is as follows. Involved in control of chromosome replication initiation. Inhibits the cooperative binding of DnaA to the oriC region, thus negatively regulating initiation of chromosome replication. Inhibits the ability of DnaA-ATP to form a helix on DNA; does not disassemble preformed DnaA-DNA helices. Decreases the residence time of DnaA on the chromosome at its binding sites (oriC, replication forks and promoter-binding sites). Tethers DnaA to the replication machinery via the DNA polymerase beta sliding clamp subunit (dnaN). Associates with oriC and other DnaA targets on the chromosome in a DnaA-dependent manner. The sequence is that of Replication initiation control protein YabA from Streptococcus pyogenes serotype M18 (strain MGAS8232).